Consider the following 98-residue polypeptide: MAKSKFRPLHDRVVVRRVESESKTAGGIIIPDTAKEKPQEGEIIAVGSGARDESGKLVPLDVKAGDRILFGKWSGTEVKLNGEDLLIMKESDIMGIIG.

Belongs to the GroES chaperonin family. As to quaternary structure, heptamer of 7 subunits arranged in a ring. Interacts with the chaperonin GroEL.

It localises to the cytoplasm. In terms of biological role, together with the chaperonin GroEL, plays an essential role in assisting protein folding. The GroEL-GroES system forms a nano-cage that allows encapsulation of the non-native substrate proteins and provides a physical environment optimized to promote and accelerate protein folding. GroES binds to the apical surface of the GroEL ring, thereby capping the opening of the GroEL channel. This is Co-chaperonin GroES 4 from Mesorhizobium japonicum (strain LMG 29417 / CECT 9101 / MAFF 303099) (Mesorhizobium loti (strain MAFF 303099)).